The following is a 141-amino-acid chain: Hemoglobin subunit alpha (141 aa).

One can recognise a Globin domain in the interval 1–141 (VLSAADKTHV…VSTVLVSKYR (141 aa)). Residue Ser3 is modified to Phosphoserine. Lys7 carries the post-translational modification N6-succinyllysine. Thr8 is subject to Phosphothreonine. At Lys11 the chain carries N6-succinyllysine. Lys16 is modified (N6-acetyllysine; alternate). Position 16 is an N6-succinyllysine; alternate (Lys16). Position 35 is a phosphoserine (Ser35). Residue Lys40 is modified to N6-succinyllysine. Ser49 carries the phosphoserine modification. Position 58 (His58) interacts with O2. Residue His87 coordinates heme b. Ser102 is modified (phosphoserine). Thr108 carries the post-translational modification Phosphothreonine. A Phosphoserine modification is found at Ser124. Thr134 carries the post-translational modification Phosphothreonine. Residue Ser138 is modified to Phosphoserine.

This sequence belongs to the globin family. In terms of assembly, heterotetramer of two alpha chains and two beta chains. Red blood cells.

Its function is as follows. Involved in oxygen transport from the lung to the various peripheral tissues. In terms of biological role, hemopressin acts as an antagonist peptide of the cannabinoid receptor CNR1. Hemopressin-binding efficiently blocks cannabinoid receptor CNR1 and subsequent signaling. The chain is Hemoglobin subunit alpha (HBA) from Dasypus novemcinctus (Nine-banded armadillo).